Reading from the N-terminus, the 191-residue chain is Potassium-transporting ATPase KdpC subunit (191 aa).

The chain crosses the membrane as a helical span at residues 11–31; the sequence is LFVLLTAVTGVVYPLAVTGIA.

Belongs to the KdpC family. In terms of assembly, the system is composed of three essential subunits: KdpA, KdpB and KdpC.

The protein resides in the cell inner membrane. Functionally, part of the high-affinity ATP-driven potassium transport (or Kdp) system, which catalyzes the hydrolysis of ATP coupled with the electrogenic transport of potassium into the cytoplasm. This subunit acts as a catalytic chaperone that increases the ATP-binding affinity of the ATP-hydrolyzing subunit KdpB by the formation of a transient KdpB/KdpC/ATP ternary complex. This chain is Potassium-transporting ATPase KdpC subunit, found in Dechloromonas aromatica (strain RCB).